The sequence spans 314 residues: Flotillin-like protein FloA (314 aa).

The chain crosses the membrane as a helical span at residues 4-24 (IGPIIIAVLIIIFLIVFFTLV).

It belongs to the flotillin-like FloA family. As to quaternary structure, homooligomerizes.

It is found in the cell membrane. The protein localises to the membrane raft. Functionally, found in functional membrane microdomains (FMM) that may be equivalent to eukaryotic membrane rafts. FMMs are highly dynamic and increase in number as cells age. Flotillins are thought to be important factors in membrane fluidity. The sequence is that of Flotillin-like protein FloA from Listeria innocua serovar 6a (strain ATCC BAA-680 / CLIP 11262).